The sequence spans 213 residues: 2-C-methyl-D-erythritol 4-phosphate cytidylyltransferase (213 aa).

The protein belongs to the IspD/TarI cytidylyltransferase family. IspD subfamily.

It catalyses the reaction 2-C-methyl-D-erythritol 4-phosphate + CTP + H(+) = 4-CDP-2-C-methyl-D-erythritol + diphosphate. Its pathway is isoprenoid biosynthesis; isopentenyl diphosphate biosynthesis via DXP pathway; isopentenyl diphosphate from 1-deoxy-D-xylulose 5-phosphate: step 2/6. Catalyzes the formation of 4-diphosphocytidyl-2-C-methyl-D-erythritol from CTP and 2-C-methyl-D-erythritol 4-phosphate (MEP). The chain is 2-C-methyl-D-erythritol 4-phosphate cytidylyltransferase from Thermus thermophilus (strain ATCC BAA-163 / DSM 7039 / HB27).